A 395-amino-acid polypeptide reads, in one-letter code: Chorismate synthase (395 aa).

NADP(+)-binding residues include R40 and R46. Residues 137–139 (RSS), G308, 323–327 (KPLPT), and R349 contribute to the FMN site.

It belongs to the chorismate synthase family. Homotetramer. FMNH2 is required as a cofactor.

The catalysed reaction is 5-O-(1-carboxyvinyl)-3-phosphoshikimate = chorismate + phosphate. Its pathway is metabolic intermediate biosynthesis; chorismate biosynthesis; chorismate from D-erythrose 4-phosphate and phosphoenolpyruvate: step 7/7. In terms of biological role, catalyzes the anti-1,4-elimination of the C-3 phosphate and the C-6 proR hydrogen from 5-enolpyruvylshikimate-3-phosphate (EPSP) to yield chorismate, which is the branch point compound that serves as the starting substrate for the three terminal pathways of aromatic amino acid biosynthesis. This reaction introduces a second double bond into the aromatic ring system. This is Chorismate synthase from Gloeobacter violaceus (strain ATCC 29082 / PCC 7421).